The primary structure comprises 883 residues: DNA mismatch repair protein MutS (883 aa).

Positions 1-25 (MSDSVAPDVPVIREGKNPAQHRDRT) are disordered. The segment covering 11–25 (VIREGKNPAQHRDRT) has biased composition (basic and acidic residues). 664–671 (GPNASGKS) provides a ligand contact to ATP. The tract at residues 857–883 (RKGNTQPRARKSSAETEAKTQQFELPF) is disordered.

The protein belongs to the DNA mismatch repair MutS family.

Functionally, this protein is involved in the repair of mismatches in DNA. It is possible that it carries out the mismatch recognition step. This protein has a weak ATPase activity. This is DNA mismatch repair protein MutS from Acaryochloris marina (strain MBIC 11017).